Here is an 886-residue protein sequence, read N- to C-terminus: CRM-domain containing factor CFM3, chloroplastic/mitochondrial (886 aa).

A chloroplast and mitochondrion-targeting transit peptide spans Met1–Ser70. Disordered stretches follow at residues Arg56–Ser84 and Thr269–His291. CRM domains are found at residues Leu174–Lys270, Pro378–Glu475, and Glu590–Arg690. A compositionally biased stretch (polar residues) spans Lys270–Met281. The disordered stretch occupies residues Ser771–Ser886. Over residues Asn793–Val827 the composition is skewed to acidic residues. Polar residues-rich tracts occupy residues Asp841 to Ser852 and Asp869 to Ser886.

As to quaternary structure, interacts with RNA. Part of large ribonucleo-protein particles that contain CAF1 and/or CAF2, and RNC1.

It is found in the plastid. It localises to the chloroplast. Its subcellular location is the mitochondrion. Binds specific group II introns in chloroplasts and facilitates their splicing. Acts on subgroup IIB introns. The substrates of the subgroup IIB also require the CRM domain proteins CAF1 or CAF2, with a simultaneous binding of CFM3 and CAF1 or CAF2. May influence the biogenesis of the mitochondrial small ribosomal subunit. The protein is CRM-domain containing factor CFM3, chloroplastic/mitochondrial of Oryza sativa subsp. japonica (Rice).